Here is a 194-residue protein sequence, read N- to C-terminus: Probable RNA 2'-phosphotransferase (194 aa).

This sequence belongs to the KptA/TPT1 family.

Removes the 2'-phosphate from RNA via an intermediate in which the phosphate is ADP-ribosylated by NAD followed by a presumed transesterification to release the RNA and generate ADP-ribose 1''-2''-cyclic phosphate (APPR&gt;P). May function as an ADP-ribosylase. This chain is Probable RNA 2'-phosphotransferase, found in Escherichia coli O45:K1 (strain S88 / ExPEC).